The primary structure comprises 154 residues: NADPH-dependent 7-cyano-7-deazaguanine reductase (154 aa).

Positions 1–11 (MAKKPVKDLKQ) are enriched in basic and acidic residues. Residues 1–31 (MAKKPVKDLKQLGHATPVPASPEEATLERVP) form a disordered region. Cys52 serves as the catalytic Thioimide intermediate. The active-site Proton donor is Asp59. Residues 74-76 (IES) and 93-94 (HE) contribute to the substrate site.

Belongs to the GTP cyclohydrolase I family. QueF type 1 subfamily.

Its subcellular location is the cytoplasm. The enzyme catalyses 7-aminomethyl-7-carbaguanine + 2 NADP(+) = 7-cyano-7-deazaguanine + 2 NADPH + 3 H(+). The protein operates within tRNA modification; tRNA-queuosine biosynthesis. Catalyzes the NADPH-dependent reduction of 7-cyano-7-deazaguanine (preQ0) to 7-aminomethyl-7-deazaguanine (preQ1). This chain is NADPH-dependent 7-cyano-7-deazaguanine reductase, found in Parvibaculum lavamentivorans (strain DS-1 / DSM 13023 / NCIMB 13966).